Consider the following 119-residue polypeptide: Large ribosomal subunit protein bL20 (119 aa).

It belongs to the bacterial ribosomal protein bL20 family.

Functionally, binds directly to 23S ribosomal RNA and is necessary for the in vitro assembly process of the 50S ribosomal subunit. It is not involved in the protein synthesizing functions of that subunit. The protein is Large ribosomal subunit protein bL20 of Xanthomonas campestris pv. campestris (strain 8004).